Consider the following 417-residue polypeptide: Serine hydroxymethyltransferase (417 aa).

Residues leucine 121 and 125–127 (GHL) contribute to the (6S)-5,6,7,8-tetrahydrofolate site. At lysine 229 the chain carries N6-(pyridoxal phosphate)lysine. Residue 355 to 357 (SPF) coordinates (6S)-5,6,7,8-tetrahydrofolate.

Belongs to the SHMT family. Homodimer. Requires pyridoxal 5'-phosphate as cofactor.

The protein localises to the cytoplasm. It carries out the reaction (6R)-5,10-methylene-5,6,7,8-tetrahydrofolate + glycine + H2O = (6S)-5,6,7,8-tetrahydrofolate + L-serine. The protein operates within one-carbon metabolism; tetrahydrofolate interconversion. It participates in amino-acid biosynthesis; glycine biosynthesis; glycine from L-serine: step 1/1. Functionally, catalyzes the reversible interconversion of serine and glycine with tetrahydrofolate (THF) serving as the one-carbon carrier. This reaction serves as the major source of one-carbon groups required for the biosynthesis of purines, thymidylate, methionine, and other important biomolecules. Also exhibits THF-independent aldolase activity toward beta-hydroxyamino acids, producing glycine and aldehydes, via a retro-aldol mechanism. In Aeromonas salmonicida (strain A449), this protein is Serine hydroxymethyltransferase.